The following is a 191-amino-acid chain: Programmed cell death protein 6 (191 aa).

N-acetylalanine is present on Ala2. EF-hand domains lie at 23-58 (PDQSFLWNVFQRVDKDRSGVISDNELQQALSNGTWT), 59-89 (PFNPVTVRSIISMFDRENKAGVNFSEFTGVW), 90-125 (KYITDWQNVFRTYDRDNSGMIDKHELKQALSGFGYR), 126-161 (LSDQFHDILIRKFDRQGRGQIAFDDFIQGCIVLQRL), and 162-191 (TDIFRRYDTDQDGWIQVSYEQYLSMVFSIV). The Ca(2+) site is built by Asp36, Asp38, Ser40, Val42, and Glu47. 5 residues coordinate Ca(2+): Asp103, Asp105, Ser107, Met109, and Glu114. Residues Asp169, Asp171, Asp173, and Trp175 each coordinate Mg(2+).

In terms of assembly, homodimer and heterodimer; heterodimerizes (via the EF-hand 5) with PEF1. Isoform 1 and isoform 2 self-associate; probably forming homodimers. Interacts with CPNE4 (via VWFA domain). Interacts with PDCD6IP; the interaction is calcium-dependent. Interacts with RBM22. Interacts with PLSCR4. Interacts with ANXA7 and TSG101. Interacts with DAPK1. Interacts with SEC31A; the interaction is calcium-dependent and promotes monoubiquitination of SEC31A. Interacts with ANXA11 (via N-terminus); the interaction is calcium-dependent. Interacts with PLSCR3 (via N-terminus); the interaction is calcium-dependent. Interacts with MCOLN1; the interaction is calcium-dependent. Interacts with KDR; the interaction is calcium-dependent. Interacts with HEBP2; the interaction is calcium-dependent. Interacts with TFG. Isoform 1: Interacts with SHISA5, leading to stabilize it. Isoform 2: Does not interact with SHISA5. Isoform 2: Does not interact with PDCD6IP, TSG101, ANXA7 and ANXA11.

It is found in the endoplasmic reticulum membrane. The protein localises to the cytoplasmic vesicle. Its subcellular location is the COPII-coated vesicle membrane. It localises to the cytoplasm. The protein resides in the nucleus. It is found in the endosome. Its function is as follows. Calcium sensor that plays a key role in processes such as endoplasmic reticulum (ER)-Golgi vesicular transport, endosomal biogenesis or membrane repair. Acts as an adapter that bridges unrelated proteins or stabilizes weak protein-protein complexes in response to calcium: calcium-binding triggers exposure of apolar surface, promoting interaction with different sets of proteins thanks to 3 different hydrophobic pockets, leading to translocation to membranes. Involved in ER-Golgi transport. Regulates ER-Golgi transport by promoting the association between PDCD6IP and TSG101, thereby bridging together the ESCRT-III and ESCRT-I complexes. Together with PEF1, acts as a calcium-dependent adapter for the BCR(KLHL12) complex, a complex involved in ER-Golgi transport by regulating the size of COPII coats. In response to cytosolic calcium increase, the heterodimer formed with PEF1 interacts with, and bridges together the BCR(KLHL12) complex and SEC31 (SEC31A or SEC31B), promoting monoubiquitination of SEC31 and subsequent collagen export, which is required for neural crest specification. Involved in the regulation of the distribution and function of MCOLN1 in the endosomal pathway. Promotes localization and polymerization of TFG at endoplasmic reticulum exit site. Required for T-cell receptor-, Fas-, and glucocorticoid-induced apoptosis. May mediate Ca(2+)-regulated signals along the death pathway: interaction with DAPK1 can accelerate apoptotic cell death by increasing caspase-3 activity. Its role in apoptosis may however be indirect, as suggested by knockout experiments. May inhibit KDR/VEGFR2-dependent angiogenesis; the function involves inhibition of VEGF-induced phosphorylation of the Akt signaling pathway. Has a lower Ca(2+) affinity than isoform 1. The polypeptide is Programmed cell death protein 6 (Rattus norvegicus (Rat)).